The sequence spans 176 residues: 3-hydroxyanthranilate 3,4-dioxygenase (176 aa).

Arg-44 is an O2 binding site. His-48, Glu-54, and His-92 together coordinate Fe cation. Glu-54 serves as a coordination point for substrate. Substrate is bound by residues Arg-96 and Glu-106. Residues Cys-121, Cys-124, Cys-158, and Cys-161 each contribute to the Fe cation site.

This sequence belongs to the 3-HAO family. As to quaternary structure, homodimer. The cofactor is Fe(2+).

The enzyme catalyses 3-hydroxyanthranilate + O2 = (2Z,4Z)-2-amino-3-carboxymuconate 6-semialdehyde. It functions in the pathway cofactor biosynthesis; NAD(+) biosynthesis; quinolinate from L-kynurenine: step 3/3. Catalyzes the oxidative ring opening of 3-hydroxyanthranilate to 2-amino-3-carboxymuconate semialdehyde, which spontaneously cyclizes to quinolinate. The sequence is that of 3-hydroxyanthranilate 3,4-dioxygenase from Xanthomonas campestris pv. campestris (strain 8004).